The chain runs to 457 residues: Cysteine--tRNA ligase (457 aa).

Cysteine 30 lines the Zn(2+) pocket. A 'HIGH' region motif is present at residues 32 to 42 (PTVYDRAHLGN). 3 residues coordinate Zn(2+): cysteine 213, histidine 238, and glutamate 242. The 'KMSKS' region signature appears at 271 to 275 (KMSKS). Lysine 274 contacts ATP.

Belongs to the class-I aminoacyl-tRNA synthetase family. In terms of assembly, monomer. Zn(2+) is required as a cofactor.

It localises to the cytoplasm. The catalysed reaction is tRNA(Cys) + L-cysteine + ATP = L-cysteinyl-tRNA(Cys) + AMP + diphosphate. The protein is Cysteine--tRNA ligase of Ruegeria sp. (strain TM1040) (Silicibacter sp.).